A 75-amino-acid chain; its full sequence is Protein SlyX homolog (75 aa).

It belongs to the SlyX family.

The chain is Protein SlyX homolog from Vibrio vulnificus (strain CMCP6).